Consider the following 158-residue polypeptide: 2-C-methyl-D-erythritol 2,4-cyclodiphosphate synthase (158 aa).

Residues Asp9 and His11 each coordinate a divalent metal cation. Residues 9–11 (DVH) and 35–36 (HS) each bind 4-CDP-2-C-methyl-D-erythritol 2-phosphate. His43 contributes to the a divalent metal cation binding site. 4-CDP-2-C-methyl-D-erythritol 2-phosphate contacts are provided by residues 57-59 (DIG), 62-66 (FPDTD), 133-136 (TTTE), Phe140, and Arg143.

Belongs to the IspF family. Homotrimer. A divalent metal cation serves as cofactor.

The catalysed reaction is 4-CDP-2-C-methyl-D-erythritol 2-phosphate = 2-C-methyl-D-erythritol 2,4-cyclic diphosphate + CMP. It participates in isoprenoid biosynthesis; isopentenyl diphosphate biosynthesis via DXP pathway; isopentenyl diphosphate from 1-deoxy-D-xylulose 5-phosphate: step 4/6. Functionally, involved in the biosynthesis of isopentenyl diphosphate (IPP) and dimethylallyl diphosphate (DMAPP), two major building blocks of isoprenoid compounds. Catalyzes the conversion of 4-diphosphocytidyl-2-C-methyl-D-erythritol 2-phosphate (CDP-ME2P) to 2-C-methyl-D-erythritol 2,4-cyclodiphosphate (ME-CPP) with a corresponding release of cytidine 5-monophosphate (CMP). This is 2-C-methyl-D-erythritol 2,4-cyclodiphosphate synthase from Haemophilus influenzae (strain PittEE).